The primary structure comprises 165 residues: Transcriptional repressor NrdR (165 aa).

A zinc finger lies at 3–34 (CPFCRHPDSRVVDSREADEGQAIRRRRSCPEC). The ATP-cone domain maps to 46-136 (LSVVKRSGVT…VYKSFSSAAD (91 aa)).

It belongs to the NrdR family. Zn(2+) serves as cofactor.

Its function is as follows. Negatively regulates transcription of bacterial ribonucleotide reductase nrd genes and operons by binding to NrdR-boxes. The sequence is that of Transcriptional repressor NrdR from Rhodococcus erythropolis (strain PR4 / NBRC 100887).